The primary structure comprises 847 residues: Nitrite reductase (NADH) large subunit (847 aa).

44–79 contacts FAD; sequence YDRVHLSSYFSHHTAEELSLVREGFYEKHGIKVLVG. Residue 193–225 coordinates NAD(+); the sequence is LRRKIESMGVRVHTSKNTLEIVQEGVEARKTMR. Residues Cys-425, Cys-427, Cys-459, and Cys-462 each coordinate [2Fe-2S] cluster. [4Fe-4S] cluster is bound by residues Cys-641, Cys-647, Cys-681, and Cys-685. Cys-685 contributes to the siroheme binding site.

It belongs to the nitrite and sulfite reductase 4Fe-4S domain family. As to quaternary structure, homodimer which associates with NirD. Requires siroheme as cofactor. It depends on [2Fe-2S] cluster as a cofactor. [4Fe-4S] cluster serves as cofactor. FAD is required as a cofactor.

It carries out the reaction NH4(+) + 3 NAD(+) + 2 H2O = nitrite + 3 NADH + 5 H(+). The protein operates within nitrogen metabolism; nitrate reduction (assimilation). The protein is Nitrite reductase (NADH) large subunit (nirB) of Escherichia coli (strain K12).